Reading from the N-terminus, the 392-residue chain is 23S rRNA (uracil(747)-C(5))-methyltransferase RlmC (392 aa).

Residues cysteine 4, cysteine 12, cysteine 15, and cysteine 93 each contribute to the [4Fe-4S] cluster site. S-adenosyl-L-methionine is bound by residues glutamine 218, phenylalanine 247, glutamate 275, and asparagine 321. Cysteine 348 serves as the catalytic Nucleophile.

Belongs to the class I-like SAM-binding methyltransferase superfamily. RNA M5U methyltransferase family. RlmC subfamily.

The enzyme catalyses uridine(747) in 23S rRNA + S-adenosyl-L-methionine = 5-methyluridine(747) in 23S rRNA + S-adenosyl-L-homocysteine + H(+). In terms of biological role, catalyzes the formation of 5-methyl-uridine at position 747 (m5U747) in 23S rRNA. The polypeptide is 23S rRNA (uracil(747)-C(5))-methyltransferase RlmC (Haemophilus influenzae (strain PittEE)).